The following is a 371-amino-acid chain: Putative F-box protein At1g58090 (371 aa).

The F-box domain occupies methionine 1–asparagine 46.

The chain is Putative F-box protein At1g58090 from Arabidopsis thaliana (Mouse-ear cress).